The following is a 261-amino-acid chain: Potassium/proton antiporter CemA (261 aa).

Helical transmembrane passes span 138–158, 184–204, and 221–241; these read IISH…YLIL, FLIL…GWEL, and IISG…KYWI.

This sequence belongs to the CemA family.

It is found in the plastid. The protein localises to the chloroplast inner membrane. It catalyses the reaction K(+)(in) + H(+)(out) = K(+)(out) + H(+)(in). Its function is as follows. Contributes to K(+)/H(+) antiport activity by supporting proton efflux to control proton extrusion and homeostasis in chloroplasts in a light-dependent manner to modulate photosynthesis. Prevents excessive induction of non-photochemical quenching (NPQ) under continuous-light conditions. Indirectly promotes efficient inorganic carbon uptake into chloroplasts. This chain is Potassium/proton antiporter CemA, found in Pinus koraiensis (Korean pine).